We begin with the raw amino-acid sequence, 500 residues long: Alpha-L-arabinofuranosidase (500 aa).

An N-terminal signal peptide occupies residues 1–21; it reads MLSNARIIAAGCIAAGSLVAA. The N-linked (GlcNAc...) asparagine glycan is linked to Asn-467.

The protein belongs to the glycosyl hydrolase 54 family.

The catalysed reaction is Hydrolysis of terminal non-reducing alpha-L-arabinofuranoside residues in alpha-L-arabinosides.. It functions in the pathway glycan metabolism; L-arabinan degradation. This Hypocrea jecorina (Trichoderma reesei) protein is Alpha-L-arabinofuranosidase (abf1).